The sequence spans 211 residues: Dibenzothiophene metabolism operon protein DoxH (211 aa).

Its pathway is aromatic compound metabolism; naphthalene degradation. Its function is as follows. May be involved in the conversion of 2-hydroxy-4-(2'-oxo-3,5-cyclohexadienyl)-buta-2,4-dienoate to cis-O-hydroxybenzylidenepyruvate. DoxH and doxJ encode different enzymes that may have interchangeable functions. The chain is Dibenzothiophene metabolism operon protein DoxH (doxH) from Pseudomonas sp. (strain C18).